The sequence spans 329 residues: Ubiquitin carboxyl-terminal hydrolase isozyme L5 (329 aa).

Positions 7-225 constitute a UCH catalytic domain; the sequence is EWCLMESDPG…IRFNLMAIVS (219 aa). At Lys47 the chain carries N6-succinyllysine. Residue Cys88 is the Nucleophile of the active site. The residue at position 158 (Lys158) is an N6-acetyllysine. Catalysis depends on His164, which acts as the Proton donor. Lys289 carries the post-translational modification N6-succinyllysine. One can recognise a ULD domain in the interval 291-319; the sequence is NYLPFIMELLKTLAEHQQLIPLVEKAKEK. The interaction with ADRM1 stretch occupies residues 313–329; it reads VEKAKEKQNAKKAQETK.

The protein belongs to the peptidase C12 family. In terms of assembly, component of the 19S (PA700) regulatory complex of the 26S proteasome. Interacts with ADRM1 and NFRKB. Component of the INO80 complex; specifically part of a complex module associated with N-terminus of INO80.

It localises to the cytoplasm. The protein localises to the nucleus. It catalyses the reaction Thiol-dependent hydrolysis of ester, thioester, amide, peptide and isopeptide bonds formed by the C-terminal Gly of ubiquitin (a 76-residue protein attached to proteins as an intracellular targeting signal).. Its activity is regulated as follows. Activated by ADRM1. Inhibited by interaction with NFRKB. Its function is as follows. Protease that specifically cleaves 'Lys-48'-linked polyubiquitin chains. Deubiquitinating enzyme associated with the 19S regulatory subunit of the 26S proteasome. Putative regulatory component of the INO80 complex; however is inactive in the INO80 complex and is activated by a transient interaction of the INO80 complex with the proteasome via ADRM1. In Mus musculus (Mouse), this protein is Ubiquitin carboxyl-terminal hydrolase isozyme L5 (Uchl5).